Consider the following 178-residue polypeptide: S-alkylcysteine N-acetyltransferase (178 aa).

Residues 4–163 (DIFRLATVED…IGVMMHKVLI (160 aa)) form the N-acetyltransferase domain.

The protein belongs to the acetyltransferase family.

It catalyses the reaction an S-substituted L-cysteine + acetyl-CoA = an N-acetyl-L-cysteine-S-conjugate + CoA + H(+). The catalysed reaction is S-benzyl-L-cysteine + acetyl-CoA = N-acetyl-S-benzyl-L-cysteine + CoA + H(+). The enzyme catalyses S-methyl-L-cysteine + acetyl-CoA = N-acetyl-S-methyl-L-cysteine + CoA + H(+). Its pathway is amino-acid metabolism. Involved in a cysteine salvage pathway from S-alkylcysteine. Catalyzes the first step in this pathway, i.e. the amine acetylation of an S-alkylcysteine with a preference for S-benzyl-L-cysteine over S-methyl-L-cysteine. This pathway is likely important in the catabolism of alkylated cysteine generated by proteolysis of alkylated glutathione formed in the detoxification of a wide range of electrophiles. This chain is S-alkylcysteine N-acetyltransferase, found in Bacillus subtilis (strain 168).